Here is a 555-residue protein sequence, read N- to C-terminus: Transmembrane protein 87A (555 aa).

The signal sequence occupies residues 1–21 (MAAAAWLQVLPVILLLLGAHP). Residues 22-225 (SPLSFFSAGP…YEYLTLEDYP (204 aa)) lie on the Lumenal side of the membrane. 2 disulfide bridges follow: Cys-74–Cys-128 and Cys-89–Cys-431. 4 N-linked (GlcNAc...) asparagine glycosylation sites follow: Asn-79, Asn-127, Asn-157, and Asn-160. A helical membrane pass occupies residues 226–246 (LMIFFMVMCIVYVLFGVLWLA). Over 247 to 257 (WSACYWRDLLR) the chain is Cytoplasmic. A helical membrane pass occupies residues 258-278 (IQFWIGAVIFLGMLEKAVFYA). Residues 279–305 (EFQNIRYKGESVQGALILAELLSAVKR) lie on the Lumenal side of the membrane. A helical membrane pass occupies residues 306-322 (SLARTLVIIVSLGYGIV). The Cytoplasmic segment spans residues 323–325 (KPR). The chain crosses the membrane as a helical span at residues 326-346 (LGVTLHKVVVAGALYLLFSGM). At 347–361 (EGVLRVTGAQTDLAS) the chain is on the lumenal side. Residues 362 to 382 (LAFIPLAFLDTALCWWIFISL) traverse the membrane as a helical segment. The Cytoplasmic portion of the chain corresponds to 383 to 403 (TQTMKLLKLRRNIVKLSLYRH). The helical transmembrane segment at 404–424 (FTNTLILAVAASIVFIIWTTM) threads the bilayer. The Lumenal portion of the chain corresponds to 425 to 437 (KFRIVTCQSDWRE). Residues 438 to 458 (LWVDDAIWRLLFSMILFVIMV) traverse the membrane as a helical segment. Topologically, residues 459 to 555 (LWRPSANNQR…ITHFERSKME (97 aa)) are cytoplasmic. The disordered stretch occupies residues 473–516 (PLSEEEEEDEQKEPMLKESFEGMKMRSTKQEPNGNSKVNKAQED). The segment covering 484-496 (KEPMLKESFEGMK) has biased composition (basic and acidic residues). Residues 502–511 (QEPNGNSKVN) are compositionally biased toward polar residues. Position 540 is a phosphoserine (Ser-540).

The protein belongs to the LU7TM family. TMEM87 subfamily. As to quaternary structure, may interact with STOML3; STOML3 potentiates the mechanosensitive ion channel activity associated with TMEM87A.

Its subcellular location is the cell membrane. The protein resides in the golgi apparatus membrane. It localises to the cell projection. It is found in the ruffle. Its function is as follows. Potential monoatomic ion channel gated by mechanical force, implicated in normal touch sensitivity through the generation of mechanically activated currents. However, a direct channel activity is debated and an alternative could be that it functions as a chaperone for an unidentified mechanosensitive ion channel. Could also be involved in cell mechanosensitivity regulating cell adhesion and migration. May also be involved in retrograde transport from endosomes to the trans-Golgi network (TGN). The chain is Transmembrane protein 87A from Homo sapiens (Human).